The sequence spans 297 residues: PsbP domain-containing protein 5, chloroplastic (297 aa).

This sequence belongs to the PsbP family.

The protein resides in the plastid. It is found in the chloroplast thylakoid lumen. Functionally, involved in strigolactone biosynthesis. The polypeptide is PsbP domain-containing protein 5, chloroplastic (PPD5) (Arabidopsis thaliana (Mouse-ear cress)).